The sequence spans 1305 residues: Contactin-associated protein like 5-1 (1305 aa).

Residues 1–24 (MDSLQRLNGLLTLVLSALWHLGLT) form the signal peptide. The region spanning 25-174 (ASNYNCDDPL…IGMRVEAYGC (150 aa)) is the F5/8 type C domain. Laminin G-like domains follow at residues 180–360 (VADF…TFSC) and 367–544 (PITF…IDLC). A glycan (N-linked (GlcNAc...) asparagine) is linked at asparagine 282. A disulfide bridge connects residues cysteine 329 and cysteine 360. Asparagine 496 carries N-linked (GlcNAc...) asparagine glycosylation. 3 disulfides stabilise this stretch: cysteine 512–cysteine 544, cysteine 550–cysteine 561, and cysteine 555–cysteine 570. An EGF-like 1 domain is found at 546–583 (IKDRCLPNYCEHGGHCAQTWTTFYCNCSDTGYTGATCH). Asparagine 571 carries N-linked (GlcNAc...) asparagine glycosylation. A disulfide bond links cysteine 572 and cysteine 582. The Fibrinogen C-terminal domain maps to 584-790 (DSIYEQSCEV…LRCNGDRHFW (207 aa)). An N-linked (GlcNAc...) asparagine glycan is attached at asparagine 622. A Laminin G-like 3 domain is found at 791-956 (NAVSFSTEAS…KLMSGVTPGC (166 aa)). Disulfide bonds link cysteine 929–cysteine 956, cysteine 960–cysteine 973, cysteine 967–cysteine 982, and cysteine 984–cysteine 994. In terms of domain architecture, EGF-like 2 spans 957–995 (PGHCSSYSSNCHNGGKCVEKQSGYSCDCTNSPNEGPFCQ). The Laminin G-like 4 domain maps to 1014-1198 (EPYLVIKNTS…VHGTLTESGC (185 aa)). Asparagine 1057 carries an N-linked (GlcNAc...) asparagine glycan. A disulfide bond links cysteine 1163 and cysteine 1198. Residues 1238-1258 (VIGGIIAVVTFVTFCVIGIMI) traverse the membrane as a helical segment.

This sequence belongs to the neurexin family.

It is found in the membrane. May play a role in the correct development and proper functioning of the peripheral and central nervous system and be involved in cell adhesion and intercellular communication. This Rattus norvegicus (Rat) protein is Contactin-associated protein like 5-1 (Cntnap5a).